A 795-amino-acid chain; its full sequence is Phenylalanine--tRNA ligase beta subunit (795 aa).

The 110-residue stretch at Ala-39–Arg-148 folds into the tRNA-binding domain. The 76-residue stretch at Pro-401–Asn-476 folds into the B5 domain. Mg(2+) is bound by residues Asp-454, Asp-460, Glu-463, and Glu-464. The FDX-ACB domain maps to Ser-701 to Arg-794.

Belongs to the phenylalanyl-tRNA synthetase beta subunit family. Type 1 subfamily. In terms of assembly, tetramer of two alpha and two beta subunits. Mg(2+) serves as cofactor.

It is found in the cytoplasm. It catalyses the reaction tRNA(Phe) + L-phenylalanine + ATP = L-phenylalanyl-tRNA(Phe) + AMP + diphosphate + H(+). This chain is Phenylalanine--tRNA ligase beta subunit, found in Sodalis glossinidius (strain morsitans).